A 512-amino-acid polypeptide reads, in one-letter code: Glutathione-binding protein GsiB (512 aa).

The N-terminal stretch at methionine 1–alanine 26 is a signal peptide.

Belongs to the bacterial solute-binding protein 5 family. The complex is composed of two ATP-binding proteins (GsiA), two transmembrane proteins (GsiC and GsiD) and a solute-binding protein (GsiB).

Its subcellular location is the periplasm. Its function is as follows. Part of the ABC transporter complex GsiABCD involved in glutathione import. Binds glutathione. In Salmonella choleraesuis (strain SC-B67), this protein is Glutathione-binding protein GsiB.